The sequence spans 293 residues: Pantothenate synthetase (293 aa).

38-45 is an ATP binding site; it reads MGALHEGH. Residue H45 is the Proton donor of the active site. Residue Q69 coordinates (R)-pantoate. Residue Q69 coordinates beta-alanine. An ATP-binding site is contributed by 155-158; that stretch reads GEKD. Q161 contributes to the (R)-pantoate binding site. ATP is bound at residue 192-195; it reads QSSR.

This sequence belongs to the pantothenate synthetase family. Homodimer.

The protein resides in the cytoplasm. It carries out the reaction (R)-pantoate + beta-alanine + ATP = (R)-pantothenate + AMP + diphosphate + H(+). Its pathway is cofactor biosynthesis; (R)-pantothenate biosynthesis; (R)-pantothenate from (R)-pantoate and beta-alanine: step 1/1. Catalyzes the condensation of pantoate with beta-alanine in an ATP-dependent reaction via a pantoyl-adenylate intermediate. In Hyphomonas neptunium (strain ATCC 15444), this protein is Pantothenate synthetase.